The following is a 210-amino-acid chain: Redox-sensing transcriptional repressor Rex (210 aa).

The H-T-H motif DNA-binding region spans 16–55 (IYMRTLQELLEDDVDVISSERLAKQCGVNPAQIRKDLAYF). 90–95 (GLGNLG) contributes to the NAD(+) binding site.

This sequence belongs to the transcriptional regulatory Rex family. As to quaternary structure, homodimer.

It localises to the cytoplasm. Its function is as follows. Modulates transcription in response to changes in cellular NADH/NAD(+) redox state. In Syntrophobacter fumaroxidans (strain DSM 10017 / MPOB), this protein is Redox-sensing transcriptional repressor Rex.